The sequence spans 228 residues: Probable ribosomal RNA small subunit methyltransferase A (228 aa).

H9, L11, G34, E55, D78, and N93 together coordinate S-adenosyl-L-methionine.

The protein belongs to the class I-like SAM-binding methyltransferase superfamily. rRNA adenine N(6)-methyltransferase family. RsmA subfamily.

The protein localises to the cytoplasm. In terms of biological role, specifically dimethylates two adjacent adenosines in the loop of a conserved hairpin near the 3'-end of 16S rRNA in the 30S particle. May play a critical role in biogenesis of 30S subunits. The polypeptide is Probable ribosomal RNA small subunit methyltransferase A (Pyrobaculum aerophilum (strain ATCC 51768 / DSM 7523 / JCM 9630 / CIP 104966 / NBRC 100827 / IM2)).